Consider the following 469-residue polypeptide: Diacetylchitobiose binding protein NgcE (469 aa).

A signal peptide (tat-type signal) is located at residues 1–37 (MTIRAGSLDRRTLLRGAIATAAMGSFAVACSSPSSED). The interval 30–54 (CSSPSSEDKESDSGPKGEKSANNPF) is disordered. Residues 35–48 (SEDKESDSGPKGEK) are compositionally biased toward basic and acidic residues.

It belongs to the bacterial solute-binding protein 1 family. As to quaternary structure, the complex is composed of two ATP-binding proteins (MsiK), two transmembrane proteins (NgcF and NgcG) and a solute-binding protein (NgcE). In terms of processing, predicted to be exported by the Tat system. The position of the signal peptide cleavage has not been experimentally proven.

The protein resides in the cell membrane. Its function is as follows. Part of the ABC transporter complex NgcEFG-MsiK involved in N,N'-diacetylchitobiose ((GlcNAc)2) uptake. Binds (GlcNAc)2. Can also bind GlcNAc. The polypeptide is Diacetylchitobiose binding protein NgcE (Streptomyces coelicolor (strain ATCC BAA-471 / A3(2) / M145)).